Consider the following 1241-residue polypeptide: ATP-dependent helicase/nuclease subunit A (1241 aa).

The UvrD-like helicase ATP-binding domain occupies 12 to 485 (SQWTDDQWKA…IDLAKNFRSR (474 aa)). 33-40 (AAAGSGKT) contacts ATP. The UvrD-like helicase C-terminal domain occupies 505–805 (GEIDYDADAE…RIMTIHKSKG (301 aa)).

Belongs to the helicase family. AddA subfamily. Heterodimer of AddA and AddB/RexB. It depends on Mg(2+) as a cofactor.

The enzyme catalyses Couples ATP hydrolysis with the unwinding of duplex DNA by translocating in the 3'-5' direction.. The catalysed reaction is ATP + H2O = ADP + phosphate + H(+). In terms of biological role, the heterodimer acts as both an ATP-dependent DNA helicase and an ATP-dependent, dual-direction single-stranded exonuclease. Recognizes the chi site generating a DNA molecule suitable for the initiation of homologous recombination. The AddA nuclease domain is required for chi fragment generation; this subunit has the helicase and 3' -&gt; 5' nuclease activities. The sequence is that of ATP-dependent helicase/nuclease subunit A from Bacillus cereus (strain G9842).